The sequence spans 943 residues: Isoleucine--tRNA ligase (943 aa).

Residues 59 to 69 carry the 'HIGH' region motif; the sequence is PYANGQIHLGH. Glu577 contributes to the L-isoleucyl-5'-AMP binding site. Residues 618–622 carry the 'KMSKS' region motif; sequence KMSKS. Lys621 is an ATP binding site. Zn(2+) contacts are provided by Cys906, Cys909, Cys926, and Cys929.

Belongs to the class-I aminoacyl-tRNA synthetase family. IleS type 1 subfamily. In terms of assembly, monomer. Requires Zn(2+) as cofactor.

It localises to the cytoplasm. It carries out the reaction tRNA(Ile) + L-isoleucine + ATP = L-isoleucyl-tRNA(Ile) + AMP + diphosphate. Catalyzes the attachment of isoleucine to tRNA(Ile). As IleRS can inadvertently accommodate and process structurally similar amino acids such as valine, to avoid such errors it has two additional distinct tRNA(Ile)-dependent editing activities. One activity is designated as 'pretransfer' editing and involves the hydrolysis of activated Val-AMP. The other activity is designated 'posttransfer' editing and involves deacylation of mischarged Val-tRNA(Ile). This is Isoleucine--tRNA ligase from Xanthomonas campestris pv. campestris (strain B100).